Consider the following 533-residue polypeptide: Apolipoprotein N-acyltransferase (533 aa).

6 helical membrane-spanning segments follow: residues 17–37, 74–94, 105–125, 127–147, 178–198, and 205–225; these read ALLAILAGAIGVLALPPFGFF, WLFGFGYFVAGLWWLGHALLI, LAILGLPAFLAIFYGVAAVLA, LLWSDGMGRIAALAFGFGLLE, VIGVLGVTVLAVFVFAAPALL, and VPGIGLAVLIAAAHFAYGYYA. A CN hydrolase domain is found at 245–495; sequence VQPAIDQEAK…QGFVDSTLSG (251 aa). Residue E290 is the Proton acceptor of the active site. K354 is an active-site residue. C407 (nucleophile) is an active-site residue. Residues 509 to 529 form a helical membrane-spanning segment; it reads YFWLIIGIVGMIAVISRMGFI.

It belongs to the CN hydrolase family. Apolipoprotein N-acyltransferase subfamily.

It localises to the cell inner membrane. The catalysed reaction is N-terminal S-1,2-diacyl-sn-glyceryl-L-cysteinyl-[lipoprotein] + a glycerophospholipid = N-acyl-S-1,2-diacyl-sn-glyceryl-L-cysteinyl-[lipoprotein] + a 2-acyl-sn-glycero-3-phospholipid + H(+). It participates in protein modification; lipoprotein biosynthesis (N-acyl transfer). Catalyzes the phospholipid dependent N-acylation of the N-terminal cysteine of apolipoprotein, the last step in lipoprotein maturation. This chain is Apolipoprotein N-acyltransferase, found in Rhizobium rhizogenes (strain K84 / ATCC BAA-868) (Agrobacterium radiobacter).